The following is a 290-amino-acid chain: MVVLHVKRGDESQFLLQAPGSTELEELTAQVARVYNGRLKVHRLCSEMEELAEHGVFLPPNMQGLTDEQIEELKLKDEWGEKCVPSGGSVFTKDEIGRRNGQAPNEKMKQVLKKTVEEAKAIVSKKQVEAGVFVTMEMVKDALDQLRGAVMIVYPMGLPPYDPIRMEFENKEDLSGTQAALEVIQESEAQLWWAAKELRRTKKLSDYVGKNEKTKIIVKIQQRGQGAPAREPVISSEEHKQLMLFYHRRQEELKKLEENDDDSCLNSPWADNTALKRHFHGVKDIKWRPR.

It belongs to the CFAP298 family. In terms of assembly, interacts with ZMYND10.

It localises to the cytoplasm. Its subcellular location is the cytoskeleton. It is found in the cilium basal body. In terms of biological role, plays a role in motile cilium function, possibly by acting on outer dynein arm assembly. Seems to be important for initiation rather than maintenance of cilium motility. Required for correct positioning of cilia at the apical cell surface, suggesting an additional role in the planar cell polarity (PCP) pathway. May suppress canonical Wnt signaling activity. The polypeptide is Cilia- and flagella-associated protein 298 (Mus musculus (Mouse)).